A 206-amino-acid polypeptide reads, in one-letter code: Small ribosomal subunit protein uS4 (206 aa).

The S4 RNA-binding domain occupies 96–156 (CRLDNVVYRM…EKAKNQLRIA (61 aa)).

The protein belongs to the universal ribosomal protein uS4 family. In terms of assembly, part of the 30S ribosomal subunit. Contacts protein S5. The interaction surface between S4 and S5 is involved in control of translational fidelity.

Functionally, one of the primary rRNA binding proteins, it binds directly to 16S rRNA where it nucleates assembly of the body of the 30S subunit. In terms of biological role, with S5 and S12 plays an important role in translational accuracy. In Azotobacter vinelandii (strain DJ / ATCC BAA-1303), this protein is Small ribosomal subunit protein uS4.